Here is a 2275-residue protein sequence, read N- to C-terminus: Multifunctional protein pyrABCN (2275 aa).

A GATase (Glutamine amidotransferase) region spans residues 1 to 440 (MPETVGHEEP…PGPRDTEYLF (440 aa)). L-glutamine-binding residues include serine 102, glycine 313, and glycine 315. A Glutamine amidotransferase type-1 domain is found at 265–453 (RVLCLDVGLK…INAIKDTIAS (189 aa)). The Nucleophile; for GATase activity role is filled by cysteine 342. Leucine 343, glutamine 346, asparagine 384, glycine 386, and tyrosine 387 together coordinate L-glutamine. Catalysis depends on for GATase activity residues histidine 426 and glutamate 428. The segment at 441–482 (DVFINAIKDTIASPEALQKPVNFPGGAVAENIKASPRVSVKK) is linker. Positions 483–1522 (VLILGSGGLS…TNVKNAKILI (1040 aa)) are CPSase (Carbamoyl-phosphate synthase). Positions 600, 640, 646, 647, 677, 679, 684, 710, 711, 712, 753, and 767 each coordinate ATP. ATP-grasp domains are found at residues 604–796 (ARSM…KLGL) and 1139–1330 (SRML…KAMI). The Mg(2+) site is built by glutamine 753, glutamate 767, and asparagine 769. Mn(2+)-binding residues include glutamine 753, glutamate 767, and asparagine 769. ATP is bound by residues arginine 1175, lysine 1214, isoleucine 1216, glutamate 1221, glycine 1246, valine 1247, histidine 1248, serine 1249, glutamine 1289, and glutamate 1301. Positions 1289, 1301, and 1303 each coordinate Mg(2+). Mn(2+) is bound by residues glutamine 1289, glutamate 1301, and asparagine 1303. An MGS-like domain is found at 1396–1575 (FKLPKRNILL…KDFEAVTKAS (180 aa)). The segment at 1523–1532 (EAIARHYALN) is linker. Residues 1533-1862 (VQTIDYQTSH…FQGKTSCLDS (330 aa)) form a defective DHOase domain region. The disordered stretch occupies residues 1863–1882 (EITPDAPKGSDMSGHRIVPA). Residues 1863–1953 (EITPDAPKGS…LQMLSRSPFK (91 aa)) form a linker region. An ATCase (Aspartate transcarbamylase) region spans residues 1954 to 2258 (QKHVLSVNQF…EFDMLMWMQM (305 aa)). The carbamoyl phosphate site is built by arginine 2006 and threonine 2007. Lysine 2034 contacts L-aspartate. Carbamoyl phosphate is bound by residues arginine 2055, histidine 2083, and glutamine 2086. Arginine 2116 and arginine 2178 together coordinate L-aspartate. Carbamoyl phosphate-binding residues include leucine 2217 and proline 2218.

It in the central section; belongs to the metallo-dependent hydrolases superfamily. DHOase family. CAD subfamily. In the N-terminal section; belongs to the CarA family. The protein in the 2nd section; belongs to the CarB family. This sequence in the 3rd section; belongs to the metallo-dependent hydrolases superfamily. DHOase family. CAD subfamily. It in the C-terminal section; belongs to the aspartate/ornithine carbamoyltransferase superfamily. ATCase family. Mg(2+) is required as a cofactor. It depends on Mn(2+) as a cofactor.

It catalyses the reaction hydrogencarbonate + L-glutamine + 2 ATP + H2O = carbamoyl phosphate + L-glutamate + 2 ADP + phosphate + 2 H(+). The enzyme catalyses L-glutamine + H2O = L-glutamate + NH4(+). The catalysed reaction is hydrogencarbonate + NH4(+) + 2 ATP = carbamoyl phosphate + 2 ADP + phosphate + 2 H(+). It carries out the reaction carbamoyl phosphate + L-aspartate = N-carbamoyl-L-aspartate + phosphate + H(+). Its pathway is pyrimidine metabolism; UMP biosynthesis via de novo pathway; (S)-dihydroorotate from bicarbonate: step 1/3. It functions in the pathway pyrimidine metabolism; UMP biosynthesis via de novo pathway; (S)-dihydroorotate from bicarbonate: step 2/3. Its function is as follows. Multifunctional protein that encodes the first 2 enzymatic activities of the de novo pyrimidine pathway: carbamoylphosphate synthetase (CPSase; EC 6.3.5.5) and aspartate transcarbamylase (ATCase; EC 2.1.3.2). The CPSase-function is accomplished in 2 steps, by a glutamine-dependent amidotransferase activity (GATase) that binds and cleaves glutamine to produce ammonia, followed by an ammonium-dependent carbamoyl phosphate synthetase, which reacts with the ammonia, hydrogencarbonate and ATP to form carbamoyl phosphate. The endogenously produced carbamoyl phosphate is sequestered and channeled to the ATCase active site. ATCase then catalyzes the formation of carbamoyl-L-aspartate from L-aspartate and carbamoyl phosphate. The chain is Multifunctional protein pyrABCN from Emericella nidulans (strain FGSC A4 / ATCC 38163 / CBS 112.46 / NRRL 194 / M139) (Aspergillus nidulans).